The sequence spans 325 residues: uncharacterized protein (325 aa).

A chloroplast-targeting transit peptide spans 1-69; sequence MAMMTTTTTT…KNRRVSVTVS (69 aa). Ala-70 bears the N-acetylalanine mark.

The protein belongs to the NAD(P)-dependent epimerase/dehydratase family.

The protein localises to the plastid. Its subcellular location is the chloroplast. This is an uncharacterized protein from Arabidopsis thaliana (Mouse-ear cress).